We begin with the raw amino-acid sequence, 702 residues long: Heparin-sulfate lyase (702 aa).

A signal peptide spans 1 to 17 (MKNIFFICFCALFAFSG). The Proton acceptor role is filled by Tyr-314.

The protein belongs to the polysaccharide lyase 12 family.

The protein resides in the periplasm. It catalyses the reaction Elimination of sulfate, appears to act on linkages between N-acetyl-D-glucosamine and uronate. Product is an unsaturated sugar.. In terms of biological role, specifically cleaves heparan sulfate-rich regions of acidic polysaccharides. Does not act on N,O-desulfated glucosamine or N-acetyl-O-sulfated glucosamine linkages. Functions in cleaving metazoan heparan sulfate and providing carbon, nitrogen and sulfate sources for microorganisms. This Bacteroides thetaiotaomicron (strain ATCC 29148 / DSM 2079 / JCM 5827 / CCUG 10774 / NCTC 10582 / VPI-5482 / E50) protein is Heparin-sulfate lyase (hepC).